Reading from the N-terminus, the 633-residue chain is Glutathione S-transferase C-terminal domain-containing protein (633 aa).

Positions 130–332 (LGFKKTCLKA…QEVPGVKTAA (203 aa)) constitute a GST C-terminal domain. The segment at 191-233 (NDDKLRRQKLKQQKADGVGPPLTKGKAKSKVHTQETSEGLDSS) is disordered. The segment covering 224–233 (QETSEGLDSS) has biased composition (polar residues). Residue Ser233 is modified to Phosphoserine.

This sequence belongs to the GSTCD family. As to expression, widely expressed in cell types relevant to airway function, including airway smooth muscle cells and epithelial cells.

The protein localises to the cytoplasm. This is Glutathione S-transferase C-terminal domain-containing protein (GSTCD) from Homo sapiens (Human).